The chain runs to 225 residues: ATP-dependent dethiobiotin synthetase BioD (225 aa).

ATP is bound at residue 12–17 (GVGKTV). Threonine 16 lines the Mg(2+) pocket. Lysine 37 is an active-site residue. Threonine 41 contacts substrate. ATP-binding positions include aspartate 46, 105-108 (EGAG), 166-167 (GS), and 196-198 (PEG). Residues aspartate 46 and glutamate 105 each contribute to the Mg(2+) site.

Belongs to the dethiobiotin synthetase family. As to quaternary structure, homodimer. Requires Mg(2+) as cofactor.

It is found in the cytoplasm. The enzyme catalyses (7R,8S)-7,8-diammoniononanoate + CO2 + ATP = (4R,5S)-dethiobiotin + ADP + phosphate + 3 H(+). It functions in the pathway cofactor biosynthesis; biotin biosynthesis; biotin from 7,8-diaminononanoate: step 1/2. Catalyzes a mechanistically unusual reaction, the ATP-dependent insertion of CO2 between the N7 and N8 nitrogen atoms of 7,8-diaminopelargonic acid (DAPA, also called 7,8-diammoniononanoate) to form a ureido ring. The sequence is that of ATP-dependent dethiobiotin synthetase BioD from Mycobacteroides abscessus (strain ATCC 19977 / DSM 44196 / CCUG 20993 / CIP 104536 / JCM 13569 / NCTC 13031 / TMC 1543 / L948) (Mycobacterium abscessus).